Consider the following 130-residue polypeptide: Transcription antitermination protein NusB (130 aa).

Belongs to the NusB family.

Functionally, involved in transcription antitermination. Required for transcription of ribosomal RNA (rRNA) genes. Binds specifically to the boxA antiterminator sequence of the ribosomal RNA (rrn) operons. This is Transcription antitermination protein NusB from Bacillus cereus (strain B4264).